A 390-amino-acid polypeptide reads, in one-letter code: Chorismate synthase 1 (390 aa).

Residues arginine 39 and arginine 45 each coordinate NADP(+). The disordered stretch occupies residues 95 to 117 (EQEEKEMKRKVTKPRPGHADLNG). Residues 132–134 (RSS), 253–254 (NA), glycine 298, 313–317 (KPIPT), and arginine 339 each bind FMN.

This sequence belongs to the chorismate synthase family. In terms of assembly, homotetramer. Requires FMNH2 as cofactor.

The catalysed reaction is 5-O-(1-carboxyvinyl)-3-phosphoshikimate = chorismate + phosphate. The protein operates within metabolic intermediate biosynthesis; chorismate biosynthesis; chorismate from D-erythrose 4-phosphate and phosphoenolpyruvate: step 7/7. Functionally, catalyzes the anti-1,4-elimination of the C-3 phosphate and the C-6 proR hydrogen from 5-enolpyruvylshikimate-3-phosphate (EPSP) to yield chorismate, which is the branch point compound that serves as the starting substrate for the three terminal pathways of aromatic amino acid biosynthesis. This reaction introduces a second double bond into the aromatic ring system. The sequence is that of Chorismate synthase 1 from Bacillus cereus (strain ATCC 10987 / NRS 248).